We begin with the raw amino-acid sequence, 89 residues long: Phytosulfokines 1 (89 aa).

The first 22 residues, Met-1–Gly-22, serve as a signal peptide directing secretion. The propeptide occupies Gln-23 to Asp-79. The segment at Gln-33–Phe-68 is disordered. N-linked (GlcNAc...) asparagine glycosylation occurs at Asn-42. Sulfotyrosine occurs at positions 80 and 82. Positions Asp-85–Pro-89 are excised as a propeptide.

It belongs to the phytosulfokine family. Sulfation is important for activity and for the binding to a putative membrane receptor. Post-translationally, PSK-alpha is produced by endopeptidase digestion. PSK-beta is produced from PSK-alpha by exopeptidase digestion. Expressed throughout the seedling. More abundant in fragments containing shoot or root apexes where cells proliferate vigorously.

The protein localises to the secreted. In terms of biological role, promotes plant cell differentiation, organogenesis and somatic embryogenesis as well as cell proliferation. This is Phytosulfokines 1 (PSK1) from Oryza sativa subsp. indica (Rice).